The sequence spans 257 residues: Pyridoxine 5'-phosphate synthase (257 aa).

Position 6 (Asn-6) interacts with 3-amino-2-oxopropyl phosphate. 8 to 9 lines the 1-deoxy-D-xylulose 5-phosphate pocket; it reads DH. Residue Arg-17 participates in 3-amino-2-oxopropyl phosphate binding. His-42 functions as the Proton acceptor in the catalytic mechanism. Arg-44 and His-49 together coordinate 1-deoxy-D-xylulose 5-phosphate. Glu-69 (proton acceptor) is an active-site residue. Thr-99 provides a ligand contact to 1-deoxy-D-xylulose 5-phosphate. The active-site Proton donor is the His-211. 3-amino-2-oxopropyl phosphate is bound by residues Gly-212 and 233–234; that span reads GQ.

The protein belongs to the PNP synthase family. In terms of assembly, homooctamer; tetramer of dimers.

The protein localises to the cytoplasm. The catalysed reaction is 3-amino-2-oxopropyl phosphate + 1-deoxy-D-xylulose 5-phosphate = pyridoxine 5'-phosphate + phosphate + 2 H2O + H(+). The protein operates within cofactor biosynthesis; pyridoxine 5'-phosphate biosynthesis; pyridoxine 5'-phosphate from D-erythrose 4-phosphate: step 5/5. In terms of biological role, catalyzes the complicated ring closure reaction between the two acyclic compounds 1-deoxy-D-xylulose-5-phosphate (DXP) and 3-amino-2-oxopropyl phosphate (1-amino-acetone-3-phosphate or AAP) to form pyridoxine 5'-phosphate (PNP) and inorganic phosphate. In Campylobacter fetus subsp. fetus (strain 82-40), this protein is Pyridoxine 5'-phosphate synthase.